Here is a 326-residue protein sequence, read N- to C-terminus: Flotillin-like protein FloA (326 aa).

A run of 2 helical transmembrane segments spans residues 6-26 (IILF…GSSV) and 27-47 (SLWI…IVFM).

The protein belongs to the flotillin-like FloA family. As to quaternary structure, homooligomerizes.

Its subcellular location is the cell membrane. It is found in the membrane raft. In terms of biological role, found in functional membrane microdomains (FMM) that may be equivalent to eukaryotic membrane rafts. FMMs are highly dynamic and increase in number as cells age. Flotillins are thought to be important factors in membrane fluidity. The chain is Flotillin-like protein FloA from Desulfosudis oleivorans (strain DSM 6200 / JCM 39069 / Hxd3) (Desulfococcus oleovorans).